Here is a 569-residue protein sequence, read N- to C-terminus: MDQSGVLLWVKAEPFIVGALQEPPPSKLSLHYLKKVAAYVRTRATERAYPRLYWPTWRHIACGKLQLAKDLAWLYFEIFDNLSERTPEERLEWSEILSNCTTKDEVEKQRNQLSVDTLQFLLFLYIQQLNKISLRTSFIGEEWPSPRNRPKSPSPAERSSCHNKNWNDYNHQAFVCDHLSELLELLLDPEQLTESFHSTQSSLLSREAVTALSFLIEGTVSRTKKVYPLHELALWQPLHAANGFSKISKTFSLYKLEAWLRACLTTNPFGLSACLQSGKKLAWAHKVEGATKRAKIACNAHMAPRSHRIVVMSQVCNQTLAKSSETLVGAHVRAHRCNESFIYLLSPLRSMTIEKCRNSTFVLGPVETALHLHGCENLKVIAVCHRLSVSSTIGCTFHIMTPSRPLILSGNQTVTFAPFHTHYPMLEDHMARTGLATVPNYWDDPMVLGGEGTDTRVFQLLPPSEFYVFVTPFEMEGDTAEIPGGLPPAYQKALAHREQRIHNWQKTVKEARLTKEQRKQFQVLVENKFYEWLVSTGHRQQLDSLVPPPAASNQVAKKDLTWSHGALET.

The region spanning 304–435 (PRSHRIVVMS…LEDHMARTGL (132 aa)) is the C-CAP/cofactor C-like domain.

The protein belongs to the TBCC family.

It localises to the cytoplasm. The protein localises to the cytoskeleton. Its subcellular location is the microtubule organizing center. It is found in the centrosome. The protein resides in the spindle pole. In terms of biological role, plays a role in the regulation of centrosome and Golgi apparatus positioning, with consequences on cell shape and cell migration. The sequence is that of TBCC domain-containing protein 1 (Tbccd1) from Rattus norvegicus (Rat).